A 441-amino-acid polypeptide reads, in one-letter code: Proline--tRNA ligase (441 aa).

Belongs to the class-II aminoacyl-tRNA synthetase family. ProS type 2 subfamily. Homodimer.

It localises to the cytoplasm. It catalyses the reaction tRNA(Pro) + L-proline + ATP = L-prolyl-tRNA(Pro) + AMP + diphosphate. Catalyzes the attachment of proline to tRNA(Pro) in a two-step reaction: proline is first activated by ATP to form Pro-AMP and then transferred to the acceptor end of tRNA(Pro). The chain is Proline--tRNA ligase from Afipia carboxidovorans (strain ATCC 49405 / DSM 1227 / KCTC 32145 / OM5) (Oligotropha carboxidovorans).